Here is a 541-residue protein sequence, read N- to C-terminus: Metal transporter Nramp1 (541 aa).

Asn17 is a glycosylation site (N-linked (GlcNAc...) asparagine). 10 helical membrane passes run 45–65, 78–98, 122–142, 153–173, 182–202, 222–242, 271–291, 315–335, 371–391, and 392–412; these read LFAYMGPGFLVSIAYIDPGNF, ELLWIILVASCAALIIQSLAA, FILWVLAEIAIVACDIPEVIG, IPVWIGVLLTGLSTLVLLALQ, LFIAFLVCTIAGCFFAELGYA, GAAGLAISLLGAMVMPHNLFL, GFALVLAFLINVSIISVSGAV, FLLENVLGSWSSKLFAIALLA, SLAIVPSLIVAIIGGSSGAGK, and LIIIASMILSFELPFALVPLL. Asn426 carries N-linked (GlcNAc...) asparagine glycosylation. 2 consecutive transmembrane segments (helical) span residues 430–450 and 465–485; these read ISSITWVIGFLIMAINIYYLA and VAAIFLGIFGFLGMAVYLAGV. Asn511 carries an N-linked (GlcNAc...) asparagine glycan.

Belongs to the NRAMP (TC 2.A.55) family.

The protein resides in the membrane. Probable divalent metal transporter. The protein is Metal transporter Nramp1 of Populus trichocarpa (Western balsam poplar).